The primary structure comprises 383 residues: ATP phosphoribosyltransferase regulatory subunit (383 aa).

This sequence belongs to the class-II aminoacyl-tRNA synthetase family. HisZ subfamily. As to quaternary structure, heteromultimer composed of HisG and HisZ subunits.

The protein resides in the cytoplasm. It participates in amino-acid biosynthesis; L-histidine biosynthesis; L-histidine from 5-phospho-alpha-D-ribose 1-diphosphate: step 1/9. In terms of biological role, required for the first step of histidine biosynthesis. May allow the feedback regulation of ATP phosphoribosyltransferase activity by histidine. The chain is ATP phosphoribosyltransferase regulatory subunit from Paraburkholderia phytofirmans (strain DSM 17436 / LMG 22146 / PsJN) (Burkholderia phytofirmans).